The sequence spans 61 residues: uncharacterized protein (61 aa).

The Extracellular portion of the chain corresponds to 1 to 20 (MSSTTSTINLSSLGSAINDV). The chain crosses the membrane as a helical span at residues 21 to 41 (LNIIVQYLPVFVTVAVLFGII). Topologically, residues 42–61 (TYMTGGLGGLFSGITGIFGS) are cytoplasmic.

Its subcellular location is the host membrane. This is an uncharacterized protein from Acidianus filamentous virus 2 (isolate Italy/Pozzuoli) (AFV-2).